The following is a 264-amino-acid chain: Acyl-[acyl-carrier-protein]--UDP-N-acetylglucosamine O-acyltransferase (264 aa).

The protein belongs to the transferase hexapeptide repeat family. LpxA subfamily. As to quaternary structure, homotrimer.

It is found in the cytoplasm. The enzyme catalyses a (3R)-hydroxyacyl-[ACP] + UDP-N-acetyl-alpha-D-glucosamine = a UDP-3-O-[(3R)-3-hydroxyacyl]-N-acetyl-alpha-D-glucosamine + holo-[ACP]. It functions in the pathway glycolipid biosynthesis; lipid IV(A) biosynthesis; lipid IV(A) from (3R)-3-hydroxytetradecanoyl-[acyl-carrier-protein] and UDP-N-acetyl-alpha-D-glucosamine: step 1/6. Functionally, involved in the biosynthesis of lipid A, a phosphorylated glycolipid that anchors the lipopolysaccharide to the outer membrane of the cell. The protein is Acyl-[acyl-carrier-protein]--UDP-N-acetylglucosamine O-acyltransferase of Rickettsia africae (strain ESF-5).